The chain runs to 161 residues: Allophycocyanin alpha chain (161 aa).

Residue Asn-71 is modified to N4-methylasparagine. (2R,3E)-phycocyanobilin is bound at residue Cys-81.

The protein belongs to the phycobiliprotein family. In terms of assembly, heterodimer of an alpha and a beta chain. In terms of processing, contains one covalently linked phycocyanobilin chromophore.

The protein localises to the plastid. The protein resides in the chloroplast thylakoid membrane. Its function is as follows. Light-harvesting photosynthetic bile pigment-protein from the phycobiliprotein complex. Allophycocyanin has a maximum absorption at approximately 650 nanometers. The protein is Allophycocyanin alpha chain (apcA) of Aglaothamnion neglectum (Red alga).